The chain runs to 165 residues: Austinoid biosynthesis cluster protein J (165 aa).

Belongs to the trt14 isomerase family. Homodimer.

It participates in secondary metabolite biosynthesis; terpenoid biosynthesis. Its function is as follows. Part of the gene cluster that mediates the biosynthesis of calidodehydroaustin, a fungal meroterpenoid. The first step of the pathway is the synthesis of 3,5-dimethylorsellinic acid by the polyketide synthase ausA. 3,5-dimethylorsellinic acid is then prenylated by the polyprenyl transferase ausN. Further epoxidation by the FAD-dependent monooxygenase ausM and cyclization by the probable terpene cyclase ausL lead to the formation of protoaustinoid A. Protoaustinoid A is then oxidized to spiro-lactone preaustinoid A3 by the combined action of the FAD-binding monooxygenases ausB and ausC, and the dioxygenase ausE. Acid-catalyzed keto-rearrangement and ring contraction of the tetraketide portion of preaustinoid A3 by ausJ lead to the formation of preaustinoid A4. The aldo-keto reductase ausK, with the help of ausH, is involved in the next step by transforming preaustinoid A4 into isoaustinone which is in turn hydroxylated by the P450 monooxygenase ausI to form austinolide. The cytochrome P450 monooxygenase ausG modifies austinolide to austinol. Austinol is further acetylated to austin by the O-acetyltransferase ausP, which spontaneously changes to dehydroaustin. The cytochrome P450 monooxygenase ausR then converts dehydroaustin is into 7-dehydrodehydroaustin. The hydroxylation catalyzed by ausR permits the O-acetyltransferase ausQ to add an additional acetyl group to the molecule, leading to the formation of acetoxydehydroaustin. The short chain dehydrogenase ausT catalyzes the reduction of the double bond present between carbon atoms 1 and 2 to convert 7-dehydrodehydroaustin into 1,2-dihydro-7-hydroxydehydroaustin. AusQ catalyzes not only an acetylation reaction but also the addition of the PKS ausV diketide product to 1,2-dihydro-7-hydroxydehydroaustin, forming precalidodehydroaustin. Finally, the iron/alpha-ketoglutarate-dependent dioxygenase converts precalidodehydroaustin into calidodehydroaustin. In Aspergillus calidoustus, this protein is Austinoid biosynthesis cluster protein J.